Reading from the N-terminus, the 296-residue chain is Light-independent protochlorophyllide reductase iron-sulfur ATP-binding protein (296 aa).

Over residues 1–11 (MTSTITRKEDG) the composition is skewed to basic and acidic residues. The segment at 1-20 (MTSTITRKEDGEGSVQVKQD) is disordered. Residues 39 to 44 (GIGKST) and Lys-68 each bind ATP. Ser-43 contributes to the Mg(2+) binding site. [4Fe-4S] cluster is bound by residues Cys-124 and Cys-158. 209-210 (NR) contributes to the ATP binding site.

The protein belongs to the NifH/BchL/ChlL family. In terms of assembly, homodimer. Protochlorophyllide reductase is composed of three subunits; ChlL, ChlN and ChlB. [4Fe-4S] cluster serves as cofactor.

The catalysed reaction is chlorophyllide a + oxidized 2[4Fe-4S]-[ferredoxin] + 2 ADP + 2 phosphate = protochlorophyllide a + reduced 2[4Fe-4S]-[ferredoxin] + 2 ATP + 2 H2O. It participates in porphyrin-containing compound metabolism; chlorophyll biosynthesis (light-independent). In terms of biological role, component of the dark-operative protochlorophyllide reductase (DPOR) that uses Mg-ATP and reduced ferredoxin to reduce ring D of protochlorophyllide (Pchlide) to form chlorophyllide a (Chlide). This reaction is light-independent. The L component serves as a unique electron donor to the NB-component of the complex, and binds Mg-ATP. The polypeptide is Light-independent protochlorophyllide reductase iron-sulfur ATP-binding protein (Prochlorococcus marinus (strain NATL1A)).